Here is a 354-residue protein sequence, read N- to C-terminus: S-adenosylmethionine:tRNA ribosyltransferase-isomerase (354 aa).

The protein belongs to the QueA family. Monomer.

It is found in the cytoplasm. The enzyme catalyses 7-aminomethyl-7-carbaguanosine(34) in tRNA + S-adenosyl-L-methionine = epoxyqueuosine(34) in tRNA + adenine + L-methionine + 2 H(+). It participates in tRNA modification; tRNA-queuosine biosynthesis. Its function is as follows. Transfers and isomerizes the ribose moiety from AdoMet to the 7-aminomethyl group of 7-deazaguanine (preQ1-tRNA) to give epoxyqueuosine (oQ-tRNA). The polypeptide is S-adenosylmethionine:tRNA ribosyltransferase-isomerase (Pseudomonas syringae pv. syringae (strain B728a)).